A 243-amino-acid chain; its full sequence is 7-cyano-7-deazaguanine synthase (243 aa).

14–24 (FSGGQDSATCL) contributes to the ATP binding site. Residues cysteine 202, cysteine 217, cysteine 220, and cysteine 223 each contribute to the Zn(2+) site.

This sequence belongs to the QueC family. Zn(2+) is required as a cofactor.

It carries out the reaction 7-carboxy-7-deazaguanine + NH4(+) + ATP = 7-cyano-7-deazaguanine + ADP + phosphate + H2O + H(+). Its pathway is purine metabolism; 7-cyano-7-deazaguanine biosynthesis. In terms of biological role, catalyzes the ATP-dependent conversion of 7-carboxy-7-deazaguanine (CDG) to 7-cyano-7-deazaguanine (preQ(0)). The polypeptide is 7-cyano-7-deazaguanine synthase (Paraburkholderia phymatum (strain DSM 17167 / CIP 108236 / LMG 21445 / STM815) (Burkholderia phymatum)).